We begin with the raw amino-acid sequence, 471 residues long: 5-hydroxytryptamine receptor 2A (471 aa).

The Extracellular segment spans residues 1-80 (MEILCEDNIS…LQEKNWSALL (80 aa)). N-linked (GlcNAc...) asparagine glycans are attached at residues N8, N38, N44, N51, and N54. A helical transmembrane segment spans residues 81 to 97 (TTVVIILTIAGNILVIM). At 98-111 (AVSLEKKLQNATNY) the chain is on the cytoplasmic side. The chain crosses the membrane as a helical span at residues 112-137 (FLMSLAIADMLLGFLVMPVSMLTILY). Residues 138–146 (GYRWPLPSK) are Extracellular-facing. The helical transmembrane segment at 147–171 (LCAVWIYLDVLFSTASIMHLCAISL) threads the bilayer. C148 and C227 are oxidised to a cystine. D155 provides a ligand contact to serotonin. Residues 172 to 174 (DRY) carry the DRY motif; important for ligand-induced conformation changes motif. The Cytoplasmic portion of the chain corresponds to 172-191 (DRYVAIQNPIHHSRFNSRTK). A helical membrane pass occupies residues 192 to 215 (AFLKIIAVWTISVGISMPIPVFGL). The Extracellular portion of the chain corresponds to 216 to 232 (QDDSKVFKEGSCLLADD). A helical membrane pass occupies residues 233–258 (NFVLIGSFVAFFIPLTIMVITYFLTI). Topologically, residues 259–322 (KSLQKEATLC…QSISNEQKAC (64 aa)) are cytoplasmic. At S280 the chain carries Phosphoserine. A helical transmembrane segment spans residues 323-348 (KVLGIVFFLFVVMWCPFFITNIMAVI). N343 serves as a coordination point for serotonin. A disulfide bond links C349 and C353. At 349 to 356 (CKESCNEN) the chain is on the extracellular side. The helical transmembrane segment at 357-382 (VIGALLNVFVWIGYLSSAVNPLVYTL) threads the bilayer. The NPxxY motif; important for ligand-induced conformation changes and signaling motif lies at 376-380 (NPLVY). Over 383–471 (FNKTYRSAFS…ETVNEKVSCV (89 aa)) the chain is Cytoplasmic. The short motif at 469-471 (SCV) is the PDZ-binding element.

Belongs to the G-protein coupled receptor 1 family. As to quaternary structure, interacts (via C-terminus) with MPDZ and PATJ. May interact (via C-terminus) with MPP3, PRDX6, DLG4, DLG1, CASK, APBA1 and MAGI2. Interacts with GRM2 and DRD2; this may affect signaling. As to expression, detected in neurons in brain cortex. Detected in adult intestine, especially in mucosal epithelium, longitudinal and circular layers of muscularis externa and myenteric plexuses. Highly expressed in Paneth cells, and detected at lower levels in enterocytes (at protein level). Detected in neurons in the brain cortex.

The protein resides in the cell membrane. It localises to the cell projection. The protein localises to the dendrite. Its subcellular location is the axon. It is found in the cytoplasmic vesicle. The protein resides in the membrane. It localises to the caveola. The protein localises to the presynapse. With respect to regulation, G-protein coupled receptor activity is regulated by lipids: oleamide increases HTR2A-mediated activity. Its function is as follows. G-protein coupled receptor for 5-hydroxytryptamine (serotonin). Also functions as a receptor for various drugs and psychoactive substances, including mescaline, psilocybin, 1-(2,5-dimethoxy-4-iodophenyl)-2-aminopropane (DOI) and lysergic acid diethylamide (LSD). Ligand binding causes a conformation change that triggers signaling via guanine nucleotide-binding proteins (G proteins) and modulates the activity of downstream effectors. HTR2A is coupled to G(q)/G(11) G alpha proteins and activates phospholipase C-beta, releasing diacylglycerol (DAG) and inositol 1,4,5-trisphosphate (IP3) second messengers that modulate the activity of phosphatidylinositol 3-kinase and promote the release of Ca(2+) ions from intracellular stores, respectively. Beta-arrestin family members inhibit signaling via G proteins and mediate activation of alternative signaling pathways. Affects neural activity, perception, cognition and mood. Plays a role in the regulation of behavior, including responses to anxiogenic situations and psychoactive substances. Plays a role in intestinal smooth muscle contraction, and may play a role in arterial vasoconstriction. In Mus musculus (Mouse), this protein is 5-hydroxytryptamine receptor 2A (Htr2a).